We begin with the raw amino-acid sequence, 83 residues long: Protein MATERNALLY EXPRESSED GENE 3 (83 aa).

Positions Met-1–Gln-22 are cleaved as a signal peptide. Cys-60 and Cys-82 are joined by a disulfide.

It belongs to the MEG family. As to expression, expressed in endosperm, anther and pollen.

The protein is Protein MATERNALLY EXPRESSED GENE 3 (MEG3) of Zea mays (Maize).